The chain runs to 728 residues: MRICFLLLAFLVAETFANELTRCCAGGTRHFKNSNTCSSIKSEGTSMTCQRAASICCLRSLLDNACDSGTDIAKEEESCPSNINILGGGLKKECCDCCLLAKDLLNRNEPCVAPVGFSAGCLRSFNKCCNGDIEITHASEIITGRPLNDPHVLHLGDRCASSHCEHLCHDRGGEKVECSCRSGFDLAPDGMACVDRNECLTRQSPCTQSEDCVNTIGGYICQRRISRLVPHRHRANRIGNAPRRMRDDPYSRAGEYREASQANTEFGCPMGWLFQHGHCVDVDECNLGSHDCGPLYQCRNTQGSYRCDAKKCGDGELQNPMTGECTSITCPNGYYPKNGMCNDIDECVTGHNCGAGEECVNTPGSFRCQQKGNLCAHGYEVNGATGFCEDVNECQQGVCGSMECINLPGTYKCKCGPGYEFNDAKKRCEDVDECIKFAGHVCDLSAECINTIGSFECKCKPGFQLASDGRRCEDVNECTTGIAACEQKCVNIPGSYQCICDRGFALGPDGTKCEDIDECSIWAGSGNDLCMGGCINTKGSYLCQCPPGYKIQPDGRTCVDVDECAMGECAGSDKVCVNTLGSFKCHSIDCPTNYIHDSLNKNQIADGYSCIKVCSTEDTECLGNHTREVLYQFRAVPSLKTIISPIEVSRIVTHMGVPFSVDYNLDYVGQRHFRIVQERNIGIVQLVKPISGPTVETIKVNIHTKSRTGVILAFNEAIIEISVSKYPF.

An N-terminal signal peptide occupies residues 1–17 (MRICFLLLAFLVAETFA). 30 disulfide bridges follow: Cys23-Cys49, Cys24-Cys56, Cys37-Cys57, Cys66-Cys94, Cys79-Cys95, Cys97-Cys121, Cys98-Cys128, Cys111-Cys129, Cys159-Cys168, Cys164-Cys178, Cys180-Cys279, Cys285-Cys298, Cys292-Cys307, Cys347-Cys359, Cys353-Cys368, Cys375-Cys388, Cys394-Cys404, Cys399-Cys413, Cys415-Cys428, Cys434-Cys448, Cys442-Cys457, Cys459-Cys472, Cys478-Cys489, Cys485-Cys498, Cys500-Cys513, Cys519-Cys534, Cys530-Cys543, Cys545-Cys558, Cys564-Cys576, and Cys569-Cys585. Anaphylatoxin-like domains follow at residues 23-64 (CCAG…LLDN), 65-96 (ACDS…ECCD), and 97-129 (CCLL…NKCC). The 40-residue stretch at 155–194 (LGDRCASSHCEHLCHDRGGEKVECSCRSGFDLAPDGMACV) folds into the EGF-like 1 domain. The region spanning 195–280 (DRNECLTRQS…GWLFQHGHCV (86 aa)) is the EGF-like 2; calcium-binding domain. Residues 281-344 (DVDECNLGSH…YPKNGMCNDI (64 aa)) enclose the EGF-like 3; calcium-binding domain. Positions 343–389 (DIDECVTGHNCGAGEECVNTPGSFRCQQKGNLCAHGYEVNGATGFCE) constitute an EGF-like 4; calcium-binding domain. Positions 390-429 (DVNECQQGVCGSMECINLPGTYKCKCGPGYEFNDAKKRCE) constitute an EGF-like 5; calcium-binding domain. An EGF-like 6; calcium-binding domain is found at 430-473 (DVDECIKFAGHVCDLSAECINTIGSFECKCKPGFQLASDGRRCE). Positions 474–514 (DVNECTTGIAACEQKCVNIPGSYQCICDRGFALGPDGTKCE) constitute an EGF-like 7; calcium-binding domain. Positions 515–559 (DIDECSIWAGSGNDLCMGGCINTKGSYLCQCPPGYKIQPDGRTCV) constitute an EGF-like 8; calcium-binding domain. One can recognise an EGF-like 9; calcium-binding domain in the interval 560 to 610 (DVDECAMGECAGSDKVCVNTLGSFKCHSIDCPTNYIHDSLNKNQIADGYSC). Asn624 carries N-linked (GlcNAc...) asparagine glycosylation.

Belongs to the fibulin family. Homomultimerizes and interacts with various extracellular matrix components. As to expression, expressed in head muscle cells, anterior and posterior intestinal cells. Isoform a: Expressed in male and hermaphrodite gonad, anterior and posterior intestine and pharyngeal basement membranes, body-wall muscle, GLR cells, uterine attachment and mechanosensory neurons. Isoform c: Expressed on ALM/PLM mechanosensory neuron attachments, in flexible tracks connecting the pharyngeal, body-wall-muscle basement membranes and in uterine attachments.

Its subcellular location is the secreted. It is found in the extracellular space. It localises to the extracellular matrix. The protein resides in the basement membrane. Its function is as follows. Incorporated into fibronectin-containing matrix fibers. Plays a role in cell adhesion and migration along protein fibers within the extracellular matrix (ECM). Important for certain developmental processes and contributes to the supramolecular organization of ECM architecture, in particular to those of basement membranes. In terms of biological role, involved in regulating the shape and adhesion of cells in the developing pharynx, intestine, body-wall muscle and gonadal tissue. During gonadogenesis, regulates the width of gonads and the migration of distal tip cells (DTC). Together with type IV collagen let-2 and downstream of metalloprotease mig-17, recruits nidogen nid-1 to the gonad basement membrane thereby inducing basement membrane remodeling required for the directional migration of DTCs. Acts antagonistically with metalloprotease gon-1 to maintain optimal levels of type IV collagen emb-9 in the gonad basement membrane during gonadogenesis. Required for larval development. Functionally, involved in the assembly of the flexible hemicentin-containing tracks found joining the pharynx and body-wall-muscle basement membranes. This Caenorhabditis elegans protein is Fibulin-1 (fbl-1).